Here is a 398-residue protein sequence, read N- to C-terminus: GTP cyclohydrolase-2 (398 aa).

The tract at residues 1–172 (MNTPTHTHPH…TAAAGASTTE (172 aa)) is unknown. Residues 173 to 398 (YELVTRTPVP…VKSIPKTGHA (226 aa)) are GTP cyclohydrolase II. A GTP-binding site is contributed by 220-224 (RVHSS). The Zn(2+) site is built by cysteine 225, cysteine 236, and cysteine 238. Residues glutamine 241, 263-265 (EGR), and threonine 285 contribute to the GTP site. Residue aspartate 297 is the Proton acceptor of the active site. Catalysis depends on arginine 299, which acts as the Nucleophile. Positions 320 and 325 each coordinate GTP. The interval 375-398 (QRPQDPSETVDGETVKSIPKTGHA) is disordered.

In the C-terminal section; belongs to the GTP cyclohydrolase II family. Zn(2+) serves as cofactor.

It catalyses the reaction GTP + 4 H2O = 2,5-diamino-6-hydroxy-4-(5-phosphoribosylamino)-pyrimidine + formate + 2 phosphate + 3 H(+). The protein operates within cofactor biosynthesis; riboflavin biosynthesis; 5-amino-6-(D-ribitylamino)uracil from GTP: step 1/4. In terms of biological role, catalyzes the conversion of GTP to 2,5-diamino-6-ribosylamino-4(3H)-pyrimidinone 5'-phosphate (DARP), formate and pyrophosphate. This chain is GTP cyclohydrolase-2 (ribA), found in Xylella fastidiosa (strain 9a5c).